The following is a 1117-amino-acid chain: Protein cup (1117 aa).

The interval 1–106 (MQMAEAEQEN…PPPPPPLPTS (106 aa)) is disordered. 2 stretches are compositionally biased toward pro residues: residues 54–64 (YPPPPPPPTPV) and 95–104 (CAPPPPPPLP). A phosphoserine mark is found at S263 and S270. The tract at residues 270-326 (SPRKQVASKEAVPEQQSSQVQQKRPPSTGIHKPGSLRAPKAVRPTTAPVVSSKPVKS) is disordered. Polar residues predominate over residues 283–294 (EQQSSQVQQKRP). The short motif at 327–333 (YTRSRLM) is the YXXXXLphi motif 1 element. 2 positions are modified to phosphoserine: S347 and S350. Residues 363-369 (ELEGRLR) carry the YXXXXLphi motif 2 motif. Disordered stretches follow at residues 493 to 528 (ISSQPQRRPNTPVMGMSINRSENDTLHSNESSEDLS), 596 to 618 (KEGNKNHGLGETERETSKQKMDH), 654 to 673 (TEHQQQKEEKRPGSGRSFQF), 679 to 728 (SQQN…SSSS), 984 to 1004 (GAKHQAQQQYLNRGQQRQARP), and 1016 to 1051 (ISGGGNNHASGYPMNGQPQKHHSNLRFGDNQNFQSF). A Phosphothreonine modification is found at T503. 5 positions are modified to phosphoserine: S509, S513, S520, S523, and S524. Low complexity-rich tracts occupy residues 679–712 (SQQNYESSSYVNHQQPPQTQPQQMQQQSNTNTNN) and 988–1001 (QAQQQYLNRGQQRQ).

This sequence belongs to the 4E-T/EIF4E-T family. As to quaternary structure, component of the osk RNP complex, which is composed of at least exu, yps, aret/bruno, cup, and the mRNA of osk. Interacts with the decapping activators me31B and tral. Component of the nanos RNP complex, which is composed of at least smg, cup, tral, me31B, the CCR4-NOT complex members Rga/NOT2 and Caf1, and the mRNA of nanos (nos). Interacts with btz. Recruited to the 3'-UTR of nos and osk mRNAs by smg and btz, respectively. Forms a ribonucleoprotein complex (RNP) containing at least me31B, eIF4E1, cup, tral and pAbp; this interaction is required for the translational silencing of maternal mRNAs during the maternal-to-zygotic transition. No interaction was detected with pAbp in 1-5 hour embryos. Interacts with osk and vas. Interacts with Pop2, twin/CCR4, Rga, Not3 and Not1 which are all core components of the CCR4-NOT deadenylase complex; interaction with the complex is required for cup deadenylation activity. Interacts with nanos. Interacts with smg. Interacts (via YXXXXLphi motifs) with eIF4E1; the interaction promotes retention of cup in the cytoplasm. Interacts with orb; the interaction represses the orb positive autoregulatory loop. Interacts with Nup154. Predominantly expressed in ovaries and in 0-2 hours old embryos. Weakly expressed in testis. Expressed in young embryos through stage 9, then it decreases throughout the rest of embryogenesis. In ovaries, it is expressed in germ cells throughout pre-vitellogenic development, but is not expressed in the somatic follicle cells. In germarial cysts, the protein (and not the transcripts) is transported selectively into the oocyte.

Its subcellular location is the cytoplasm. The protein resides in the nucleus. It is found in the cytoplasmic ribonucleoprotein granule. Functionally, adapter protein that plays a central role in localization of transcripts in the oocyte and in young embryos. Maintains RNA targets in a repressed state by promoting their deadenylation and protects deadenylated mRNAs from further degradation. Binds to and recruits eIF-4E to the 3'-UTR of some mRNA targets which prevents interaction between eIF4E1 and eIF4G. This may contribute to translational repression but does not appear to be necessary for it to occur. Can promote translational repression independently of deadenylation and eIF4E1 binding. Required for correct localization of eIF4E1 in the developing oocyte. Required for translational repression of oskar (osk) mRNA. Also required for the translational repression of nanos (nos) mRNA. Promotes the accumulation of the germ plasm components osk, vas and stau at the posterior pole of the oocyte and is required for germ cell development. Represses orb positive autoregulatory activity which prevents premature activation of orb and ensures its accumulation specifically in the developing oocyte. In 0-1 hour embryos, forms a complex with me31B, cup, tral and pAbp which binds to various mRNAs including maternal mRNAs, and down-regulates their expression during the maternal-to-zygotic transition. The polypeptide is Protein cup (cup) (Drosophila melanogaster (Fruit fly)).